Reading from the N-terminus, the 220-residue chain is Fructose-6-phosphate aldolase 2 (220 aa).

Residue Lys-85 is the Schiff-base intermediate with substrate of the active site.

Belongs to the transaldolase family. Type 3A subfamily. In terms of assembly, homodecamer.

It is found in the cytoplasm. It catalyses the reaction beta-D-fructose 6-phosphate = dihydroxyacetone + D-glyceraldehyde 3-phosphate. Functionally, catalyzes the reversible formation of fructose 6-phosphate from dihydroxyacetone and D-glyceraldehyde 3-phosphate via an aldolization reaction. Can utilize hydroxyacetone as an alternative donor substrate. Is also able to catalyze the direct self-aldol addition of glycolaldehyde. Is less catalytically efficient than the isozyme FsaA. Does not display transaldolase activity. The chain is Fructose-6-phosphate aldolase 2 (fsaB) from Escherichia coli (strain K12).